Consider the following 364-residue polypeptide: Formimidoylglutamase (364 aa).

Residues His133, Asp189, His191, Asp193, Asp286, and Asp288 each coordinate Mn(2+).

The protein belongs to the arginase family. Mn(2+) serves as cofactor.

It catalyses the reaction N-formimidoyl-L-glutamate + H2O = formamide + L-glutamate. It participates in amino-acid degradation; L-histidine degradation into L-glutamate; L-glutamate from N-formimidoyl-L-glutamate (hydrolase route): step 1/1. Catalyzes the conversion of N-formimidoyl-L-glutamate to L-glutamate and formamide. In Photobacterium profundum (strain SS9), this protein is Formimidoylglutamase.